Here is a 94-residue protein sequence, read N- to C-terminus: Secretoglobin family 1C member 1 (94 aa).

An N-terminal signal peptide occupies residues 1–22 (MKGSSALLVALTVLCICGLTRA).

It belongs to the secretoglobin family. As to expression, expressed in the olfactory mucosa.

Its subcellular location is the secreted. The protein is Secretoglobin family 1C member 1 (Scgb1c1) of Rattus norvegicus (Rat).